Reading from the N-terminus, the 138-residue chain is MILQQPLQRGPQGGAQRLPRAALGVTWGLDASSPLRGAVPMSTKRRLEEEQEPLRKQFLSEENMATHFSQLSLHNDHPYCSPPMTFSPALPPLRSPCSELLLWRYPGSLIPEALRLLRLGDTPSPPYPATPAGDIMEL.

Residues 76-79 (DHPY) are interaction with HCFC1. Positions 110 to 119 (IPEALRLLRL) match the Nuclear export signal motif.

In terms of assembly, interacts with HCFC1. In terms of tissue distribution, widely expressed.

The protein resides in the cytoplasm. It is found in the nucleus. Functionally, regulates HCFC1 activity by modulating its subcellular localization. Overexpression of HCFC1R1 leads to accumulation of HCFC1 in the cytoplasm. HCFC1R1-mediated export may provide the pool of cytoplasmic HCFC1 required for import of virion-derived VP16 into the nucleus. The polypeptide is Host cell factor C1 regulator 1 (HCFC1R1) (Homo sapiens (Human)).